A 251-amino-acid chain; its full sequence is Flap endonuclease Xni (251 aa).

Asp-104 provides a ligand contact to Mg(2+). Residues Val-160–Leu-249 form the 5'-3' exonuclease domain. Leu-171, Ala-172, Pro-180, Val-182, and Ile-185 together coordinate K(+). Residues Gly-184–Ser-189 form an interaction with DNA region.

It belongs to the Xni family. Mg(2+) serves as cofactor. Requires K(+) as cofactor.

Has flap endonuclease activity. During DNA replication, flap endonucleases cleave the 5'-overhanging flap structure that is generated by displacement synthesis when DNA polymerase encounters the 5'-end of a downstream Okazaki fragment. The protein is Flap endonuclease Xni of Escherichia coli O6:K15:H31 (strain 536 / UPEC).